Consider the following 610-residue polypeptide: C4b-binding protein alpha chain (610 aa).

Residues 1–48 form the signal peptide; the sequence is MKHQRVPVMILHSKGTMASWPFSRLWSISDPILFQVTLVATLLATVLG. 8 consecutive Sushi domains span residues 49 to 109, 110 to 171, 172 to 236, 237 to 296, 297 to 364, 365 to 427, 428 to 485, and 486 to 543; these read SCGI…FCVK, KRCE…QCII, AKCE…SCKK, VICV…TCEL, NGCL…ECKE, VCCP…ECRP, DCKS…QCKA, and LCLK…KCEW. Intrachain disulfides connect cysteine 50-cysteine 95, cysteine 80-cysteine 107, cysteine 112-cysteine 153, cysteine 139-cysteine 169, cysteine 174-cysteine 217, cysteine 203-cysteine 234, cysteine 239-cysteine 281, cysteine 267-cysteine 294, cysteine 299-cysteine 350, cysteine 334-cysteine 362, cysteine 367-cysteine 412, cysteine 402-cysteine 425, cysteine 429-cysteine 471, cysteine 457-cysteine 483, cysteine 487-cysteine 528, and cysteine 514-cysteine 541. The N-linked (GlcNAc...) asparagine glycan is linked to asparagine 66. Asparagine 221 carries N-linked (GlcNAc...) asparagine glycosylation. Residues asparagine 525 and asparagine 602 are each glycosylated (N-linked (GlcNAc...) asparagine).

In terms of assembly, disulfide-linked complex of alpha and beta chains.

The protein resides in the secreted. Its function is as follows. Controls the classical pathway of complement activation. It binds as a cofactor to C3b/C4b inactivator (C3bINA), which then hydrolyzes the complement fragment C4b. It also accelerates the degradation of the C4bC2a complex (C3 convertase) by dissociating the complement fragment C2a. Alpha chain binds C4b. It also interacts with serum amyloid P component. The chain is C4b-binding protein alpha chain (C4BPA) from Bos taurus (Bovine).